Here is a 72-residue protein sequence, read N- to C-terminus: Translational regulator CsrA (72 aa).

This sequence belongs to the CsrA/RsmA family. As to quaternary structure, homodimer; the beta-strands of each monomer intercalate to form a hydrophobic core, while the alpha-helices form wings that extend away from the core.

It localises to the cytoplasm. In terms of biological role, a translational regulator that binds mRNA to regulate translation initiation and/or mRNA stability. Usually binds in the 5'-UTR at or near the Shine-Dalgarno sequence preventing ribosome-binding, thus repressing translation. Its main target seems to be the major flagellin gene, while its function is anatagonized by FliW. In Ruminiclostridium cellulolyticum (strain ATCC 35319 / DSM 5812 / JCM 6584 / H10) (Clostridium cellulolyticum), this protein is Translational regulator CsrA.